The chain runs to 273 residues: DnaJ homolog subfamily C member 27 (273 aa).

GTP-binding positions include 23–30 (GNAEVGKS), 71–75 (DMAGH), and 134–137 (NKID). The J domain maps to 217–273 (DSWDMLGVKPGATRDEVNKAYRKLAVLLHPDKCVAPGSEDAFKAVVNARTALLKNIK).

This sequence belongs to the small GTPase superfamily. Rab family.

It localises to the nucleus. In terms of biological role, GTPase possibly involved in regulation of the MEK/ERK pathway. This chain is DnaJ homolog subfamily C member 27 (DNAJC27), found in Gallus gallus (Chicken).